Here is an 84-residue protein sequence, read N- to C-terminus: U4-theraphotoxin-Hhn1aa (84 aa).

Positions M1–A22 are cleaved as a signal peptide. Positions E23–R47 are excised as a propeptide. 2 cysteine pairs are disulfide-bonded: C51–C65 and C55–C76.

The protein belongs to the neurotoxin 12 (Hwtx-2) family. 02 (Hwtx-2) subfamily. In terms of tissue distribution, expressed by the venom gland.

It is found in the secreted. In terms of biological role, postsynaptic neurotoxin. This chain is U4-theraphotoxin-Hhn1aa, found in Cyriopagopus hainanus (Chinese bird spider).